The primary structure comprises 71 residues: Large ribosomal subunit protein bL31 (71 aa).

Positions 16, 18, 36, and 39 each coordinate Zn(2+).

The protein belongs to the bacterial ribosomal protein bL31 family. Type A subfamily. Part of the 50S ribosomal subunit. Requires Zn(2+) as cofactor.

Binds the 23S rRNA. This Thermotoga maritima (strain ATCC 43589 / DSM 3109 / JCM 10099 / NBRC 100826 / MSB8) protein is Large ribosomal subunit protein bL31.